The primary structure comprises 501 residues: Glutamate--tRNA ligase (501 aa).

A 'HIGH' region motif is present at residues 11 to 21 (PSPTGALHIGG). The short motif at 260–264 (KLSKR) is the 'KMSKS' region element. ATP is bound at residue lysine 263.

The protein belongs to the class-I aminoacyl-tRNA synthetase family. Glutamate--tRNA ligase type 1 subfamily. As to quaternary structure, monomer.

Its subcellular location is the cytoplasm. The enzyme catalyses tRNA(Glu) + L-glutamate + ATP = L-glutamyl-tRNA(Glu) + AMP + diphosphate. Functionally, catalyzes the attachment of glutamate to tRNA(Glu) in a two-step reaction: glutamate is first activated by ATP to form Glu-AMP and then transferred to the acceptor end of tRNA(Glu). The sequence is that of Glutamate--tRNA ligase from Flavobacterium psychrophilum (strain ATCC 49511 / DSM 21280 / CIP 103535 / JIP02/86).